A 340-amino-acid chain; its full sequence is Protein-arginine kinase (340 aa).

In terms of domain architecture, Phosphagen kinase C-terminal spans 21–242 (VVLSSRIRLA…EQIIMQERIA (222 aa)). Residues 24 to 28 (SSRIR), H79, R113, 164 to 168 (RASVM), and 195 to 200 (RGIYGE) contribute to the ATP site.

The protein belongs to the ATP:guanido phosphotransferase family.

It carries out the reaction L-arginyl-[protein] + ATP = N(omega)-phospho-L-arginyl-[protein] + ADP + H(+). Catalyzes the specific phosphorylation of arginine residues in proteins. This chain is Protein-arginine kinase, found in Listeria monocytogenes serotype 4a (strain HCC23).